The primary structure comprises 341 residues: Biotin synthase (341 aa).

Positions 43–266 constitute a Radical SAM core domain; the sequence is SEIQLSQLLS…IAVARIVCPK (224 aa). The [4Fe-4S] cluster site is built by C58, C62, and C65. [2Fe-2S] cluster is bound by residues C102, C133, C193, and R270.

This sequence belongs to the radical SAM superfamily. Biotin synthase family. As to quaternary structure, homodimer. The cofactor is [4Fe-4S] cluster. Requires [2Fe-2S] cluster as cofactor.

The enzyme catalyses (4R,5S)-dethiobiotin + (sulfur carrier)-SH + 2 reduced [2Fe-2S]-[ferredoxin] + 2 S-adenosyl-L-methionine = (sulfur carrier)-H + biotin + 2 5'-deoxyadenosine + 2 L-methionine + 2 oxidized [2Fe-2S]-[ferredoxin]. The protein operates within cofactor biosynthesis; biotin biosynthesis; biotin from 7,8-diaminononanoate: step 2/2. Catalyzes the conversion of dethiobiotin (DTB) to biotin by the insertion of a sulfur atom into dethiobiotin via a radical-based mechanism. This chain is Biotin synthase, found in Caulobacter vibrioides (strain ATCC 19089 / CIP 103742 / CB 15) (Caulobacter crescentus).